The sequence spans 964 residues: Adhesion defective protein 3 (964 aa).

Residues 1–32 form a disordered region; sequence MADFMDIEPSSHSAKASQYESSAPASSSLGNS. Residues 16-32 are compositionally biased toward low complexity; it reads ASQYESSAPASSSLGNS. In terms of domain architecture, LisH spans 34 to 66; that stretch reads PNESLDYYIYDYFVKHNFEEAAQAFLRESKIQI. A compositionally biased stretch (low complexity) spans 69-83; it reads SSSSTAFSPSNNNAP. Disordered stretches follow at residues 69 to 125, 241 to 273, 476 to 523, 572 to 596, and 664 to 914; these read SSSS…EETN, PKGTPSTSIEGAKTSIPPSHAMQNPHNSFPASA, VSMK…TSRM, QTLSSGNQPPQQSGPNPNEFSMSMD, and APMI…KPIS. Polar residues-rich tracts occupy residues 93–103, 261–270, and 508–523; these read LASPSKISESI, AMQNPHNSFP, and TQANGSRYMNPSTSRM. A compositionally biased stretch (low complexity) spans 575 to 589; sequence SSGNQPPQQSGPNPN. Composition is skewed to polar residues over residues 664–700, 707–716, 724–752, 767–801, 818–828, and 857–868; these read APMIQPNVPVSANSPAQANTPAADSTKSGTIQPTNRN, SPHQQFSPSA, RSMSPFVSQQQQLNQPVSNKPDGLTQNKE, AFPQSRTSWMMPQSFDTSSLNAPGAKDSSSFSSLH, TIRTTERSTFS, and GGTNSISQDTTQ. Residues 869–885 are compositionally biased toward low complexity; sequence SLQMQSNSVNSSSMVDA. Residues 894–905 are compositionally biased toward polar residues; the sequence is GDTSALDSNAKN.

Belongs to the FLO8 family.

The protein resides in the cytoplasm. Its subcellular location is the nucleus. In terms of biological role, probable transcriptional regulator involved in cell adhesion. The chain is Adhesion defective protein 3 (adn3) from Schizosaccharomyces pombe (strain 972 / ATCC 24843) (Fission yeast).